Reading from the N-terminus, the 153-residue chain is Large ribosomal subunit protein uL22 (153 aa).

Belongs to the universal ribosomal protein uL22 family. In terms of assembly, part of the 50S ribosomal subunit.

In terms of biological role, this protein binds specifically to 23S rRNA. It makes multiple contacts with different domains of the 23S rRNA in the assembled 50S subunit and ribosome. Its function is as follows. The globular domain of the protein is located near the polypeptide exit tunnel on the outside of the subunit, while an extended beta-hairpin is found that lines the wall of the exit tunnel in the center of the 70S ribosome. This is Large ribosomal subunit protein uL22 from Methanococcus aeolicus (strain ATCC BAA-1280 / DSM 17508 / OCM 812 / Nankai-3).